Consider the following 124-residue polypeptide: Late histone H2B.2.1 (124 aa).

The tract at residues 1 to 32 (MPAKQTSGKGAKKAGKAKGRPAGASKTRRRKR) is disordered. The span at 10–19 (GAKKAGKAKG) shows a compositional bias: basic residues. Ser111 carries O-linked (GlcNAc) serine glycosylation. Lys119 is covalently cross-linked (Glycyl lysine isopeptide (Lys-Gly) (interchain with G-Cter in ubiquitin)).

The protein belongs to the histone H2B family. As to quaternary structure, the nucleosome is a histone octamer containing two molecules each of H2A, H2B, H3 and H4 assembled in one H3-H4 heterotetramer and two H2A-H2B heterodimers. The octamer wraps approximately 147 bp of DNA. Monoubiquitination of Lys-119 gives a specific tag for epigenetic transcriptional activation and is also prerequisite for histone H3 'Lys-4' and 'Lys-79' methylation. Post-translationally, glcNAcylation at Ser-111 promotes monoubiquitination of Lys-119. It fluctuates in response to extracellular glucose, and associates with transcribed genes.

The protein localises to the nucleus. Its subcellular location is the chromosome. In terms of biological role, core component of nucleosome. Nucleosomes wrap and compact DNA into chromatin, limiting DNA accessibility to the cellular machineries which require DNA as a template. Histones thereby play a central role in transcription regulation, DNA repair, DNA replication and chromosomal stability. DNA accessibility is regulated via a complex set of post-translational modifications of histones, also called histone code, and nucleosome remodeling. This Psammechinus miliaris (Green sea urchin) protein is Late histone H2B.2.1.